Reading from the N-terminus, the 215-residue chain is 3-demethoxyubiquinol 3-hydroxylase (215 aa).

The Fe cation site is built by Glu64, Glu94, His97, Glu146, Glu178, and His181.

Belongs to the COQ7 family. Fe cation serves as cofactor.

The protein resides in the cell membrane. The enzyme catalyses a 5-methoxy-2-methyl-3-(all-trans-polyprenyl)benzene-1,4-diol + AH2 + O2 = a 3-demethylubiquinol + A + H2O. It participates in cofactor biosynthesis; ubiquinone biosynthesis. In terms of biological role, catalyzes the hydroxylation of 2-nonaprenyl-3-methyl-6-methoxy-1,4-benzoquinol during ubiquinone biosynthesis. This Coxiella burnetii (strain RSA 331 / Henzerling II) protein is 3-demethoxyubiquinol 3-hydroxylase.